Reading from the N-terminus, the 126-residue chain is Fluoride-specific ion channel FluC (126 aa).

Transmembrane regions (helical) follow at residues 4 to 24 (PLLS…FLGL), 33 to 53 (IPLG…FAMA), 67 to 87 (FVIT…IEIV), and 97 to 117 (MAML…CLGL). Gly74 and Thr77 together coordinate Na(+).

It belongs to the fluoride channel Fluc/FEX (TC 1.A.43) family.

The protein resides in the cell inner membrane. It catalyses the reaction fluoride(in) = fluoride(out). Na(+) is not transported, but it plays an essential structural role and its presence is essential for fluoride channel function. Fluoride-specific ion channel. Important for reducing fluoride concentration in the cell, thus reducing its toxicity. The polypeptide is Fluoride-specific ion channel FluC (Acinetobacter baumannii (strain AB307-0294)).